Here is a 568-residue protein sequence, read N- to C-terminus: Sentrin-specific protease 3 (568 aa).

Positions 1 to 119 (MKETIQGTGS…PSHRKTCSQR (119 aa)) are disordered. S52, S71, and S73 each carry phosphoserine. Residues 72–87 (ASEEEEEEEEEDEEEV) show a composition bias toward acidic residues. Positions 106 to 119 (RALRPSHRKTCSQR) are enriched in basic residues. 2 short sequence motifs (nuclear localization signal) span residues 119-122 (RRRR) and 147-153 (RHRGRRR). The tract at residues 155 to 174 (LAHPKNHLSPQEGGATPQVP) is disordered. Phosphoserine is present on S163. T170 bears the Phosphothreonine mark. Phosphoserine is present on residues S175, S182, S206, and S226. The interval 380–537 (HVLTMDDLGT…AFVLQYCKHL (158 aa)) is protease. Active-site residues include H459 and D476. The active-site Nucleophile is C526.

It belongs to the peptidase C48 family. Component of some MLL1/MLL complex, at least composed of the core components KMT2A/MLL1, ASH2L, HCFC1/HCF1, WDR5 and RBBP5, as well as the facultative components BACC1, CHD8, E2F6, HSP70, INO80C, KANSL1, LAS1L, MAX, MCRS1, MGA, MYST1/MOF, PELP1, PHF20, PRP31, RING2, RUVB1/TIP49A, RUVB2/TIP49B, SENP3, TAF1, TAF4, TAF6, TAF7, TAF9 and TEX10. Interacts with EP300, NPM1 and CDCA8. Component of the 5FMC complex, at least composed of PELP1, LAS1L, TEX10, WDR18 and SENP3; the complex interacts with methylated CHTOP and ZNF148. Interacts with NOL9. Interacts with CCAR2.

It is found in the nucleus. The protein resides in the nucleolus. The protein localises to the nucleoplasm. Its subcellular location is the cytoplasm. On oxidative stress, SENP3 degradation is blocked by inhibition of its ubiquitination, which stabilizes it as it accumulates in the nucleoplasm. In terms of biological role, protease that releases SUMO2 and SUMO3 monomers from sumoylated substrates, but has only weak activity against SUMO1 conjugates. Deconjugates SUMO2 from MEF2D, which increases its transcriptional activation capability. Deconjugates SUMO2 and SUMO3 from CDCA8. Redox sensor that, when redistributed into nucleoplasm, can act as an effector to enhance HIF1A transcriptional activity by desumoylating EP300. Required for rRNA processing through deconjugation of SUMO2 and SUMO3 from nucleophosmin, NPM1. Plays a role in the regulation of sumoylation status of ZNF148. Functions as a component of the Five Friends of Methylated CHTOP (5FMC) complex; the 5FMC complex is recruited to ZNF148 by methylated CHTOP, leading to desumoylation of ZNF148 and subsequent transactivation of ZNF148 target genes. Deconjugates SUMO2 from KAT5. Catalyzes desumoylation of MRE11. The chain is Sentrin-specific protease 3 (Senp3) from Mus musculus (Mouse).